The sequence spans 3974 residues: Hybrid PKS-NRPS synthetase 1 (3974 aa).

The region spanning 5–442 (SQKIAIIGSA…GTNAHCLIES (438 aa)) is the Ketosynthase family 3 (KS3) domain. Catalysis depends on for beta-ketoacyl synthase activity residues cysteine 179, histidine 316, and histidine 362. The tract at residues 561 to 883 (IFTGQGAQWA…TGILERGLDD (323 aa)) is malonyl-CoA:ACP transacylase (MAT) domain. Residues 954–1079 (HPLLGSRLSA…HDSELGIPES (126 aa)) form an N-terminal hotdog fold region. A dehydratase (DH) domain region spans residues 954-1251 (HPLLGSRLSA…QVESVKLVPV (298 aa)). The region spanning 954-1257 (HPLLGSRLSA…LVPVITPDAS (304 aa)) is the PKS/mFAS DH domain. The Proton acceptor; for dehydratase activity role is filled by histidine 986. The segment at 1107–1257 (TTPISSAKIY…LVPVITPDAS (151 aa)) is C-terminal hotdog fold. Aspartate 1165 serves as the catalytic Proton donor; for dehydratase activity. The segment at 1398–1529 (PWNTELRNAI…GYLLLVAKTG (132 aa)) is methyltransferase (MT) domain. Positions 2108-2282 (TYFLAGMTDS…ASIMDTGVVT (175 aa)) are ketoreductase (KR) domain. Positions 2492 to 2516 (AGRSASPGASCSDRSLSTRSDETRS) are disordered. The segment covering 2498–2509 (PGASCSDRSLST) has biased composition (polar residues). A condensation (C) domain region spans residues 2560 to 2994 (APLSPGQAQL…LERLRTSSDQ (435 aa)). Positions 3021-3423 (DAMAEKYFDQ…DGSLILLGRM (403 aa)) are adenylation (A) (KR) domain. Positions 3537–3613 (SADQLVEAEV…EMAEKMASVR (77 aa)) constitute a Carrier domain. At serine 3573 the chain carries O-(pantetheine 4'-phosphoryl)serine. Residues 3657-3940 (VVLTGAADLL…KLEMGEWIAL (284 aa)) form a reductase (RED) domain region.

The protein in the C-terminal section; belongs to the NRP synthetase family.

Its pathway is secondary metabolite biosynthesis. Its function is as follows. Hybrid PKS-NRPS synthetase; part of the hps1-dma1 gene cluster that probably mediates the biosynthesis a derivative of cyclopiazonic acid (CPA). The hybrid polyketide synthase-nonribosomal peptide synthetase (PKS-NRPS) nps1 might incorporates acetyl-CoA, malonyl-CoA, and tryptophan (Trp) and utilizes a C-terminal redox-incompetent reductase domain to make and release the tryptophan tetramic acid, cyclo-acetoacetyl-L-tryptophan (c-AATrp), as the first intermediate in the pathway. In addition, the cluster also includes the tryptophan dimethylallyltransferase dma1, the FAD-dependent oxidoreductase toxD, the cytochrome P450 monooxygenase cyp3.1 and the methyltransferase DOTSEDRAFT_139328; the latter 2 being not present in all CPA-producing fungi but involved in additional modifications that occur in biosynthesis the of a range of CPA and CPA-like products. Further studies are required to clarify whether the CPA-like hps1-dma1 cluster is functional or a non-functional relic reflecting evolution of D.septosporum. The chain is Hybrid PKS-NRPS synthetase 1 from Dothistroma septosporum (strain NZE10 / CBS 128990) (Red band needle blight fungus).